Reading from the N-terminus, the 279-residue chain is Release factor glutamine methyltransferase (279 aa).

Residues 118 to 122 (GTGSG), aspartate 141, and asparagine 182 contribute to the S-adenosyl-L-methionine site. 182-185 (NPPY) contributes to the substrate binding site.

The protein belongs to the protein N5-glutamine methyltransferase family. PrmC subfamily.

The catalysed reaction is L-glutaminyl-[peptide chain release factor] + S-adenosyl-L-methionine = N(5)-methyl-L-glutaminyl-[peptide chain release factor] + S-adenosyl-L-homocysteine + H(+). In terms of biological role, methylates the class 1 translation termination release factors RF1/PrfA and RF2/PrfB on the glutamine residue of the universally conserved GGQ motif. The polypeptide is Release factor glutamine methyltransferase (Streptococcus pneumoniae (strain ATCC BAA-255 / R6)).